Here is a 155-residue protein sequence, read N- to C-terminus: Aspartate carbamoyltransferase regulatory chain (155 aa).

Positions 110, 115, 139, and 142 each coordinate Zn(2+).

The protein belongs to the PyrI family. As to quaternary structure, contains catalytic and regulatory chains. It depends on Zn(2+) as a cofactor.

Involved in allosteric regulation of aspartate carbamoyltransferase. The chain is Aspartate carbamoyltransferase regulatory chain from Yersinia pestis bv. Antiqua (strain Antiqua).